A 313-amino-acid chain; its full sequence is Porphobilinogen deaminase (313 aa).

Cysteine 241 is modified (S-(dipyrrolylmethanemethyl)cysteine).

This sequence belongs to the HMBS family. As to quaternary structure, monomer. Requires dipyrromethane as cofactor.

It carries out the reaction 4 porphobilinogen + H2O = hydroxymethylbilane + 4 NH4(+). Its pathway is porphyrin-containing compound metabolism; protoporphyrin-IX biosynthesis; coproporphyrinogen-III from 5-aminolevulinate: step 2/4. It functions in the pathway porphyrin-containing compound metabolism; chlorophyll biosynthesis. In terms of biological role, tetrapolymerization of the monopyrrole PBG into the hydroxymethylbilane pre-uroporphyrinogen in several discrete steps. This chain is Porphobilinogen deaminase, found in Chlorobium limicola (strain DSM 245 / NBRC 103803 / 6330).